A 452-amino-acid chain; its full sequence is Phosphoglucosamine mutase (452 aa).

Catalysis depends on Ser101, which acts as the Phosphoserine intermediate. Mg(2+) contacts are provided by Ser101, Asp241, Asp243, and Asp245. Ser101 bears the Phosphoserine mark.

Belongs to the phosphohexose mutase family. The cofactor is Mg(2+). In terms of processing, activated by phosphorylation.

The enzyme catalyses alpha-D-glucosamine 1-phosphate = D-glucosamine 6-phosphate. Functionally, catalyzes the conversion of glucosamine-6-phosphate to glucosamine-1-phosphate. This chain is Phosphoglucosamine mutase, found in Lactococcus lactis subsp. cremoris (strain MG1363).